Consider the following 379-residue polypeptide: Transcription termination factor 1b, mitochondrial (379 aa).

The N-terminal 37 residues, methionine 1–threonine 37, are a transit peptide targeting the mitochondrion. 5 interaction with DNA regions span residues arginine 151–serine 152, glutamine 229–arginine 233, serine 306–lysine 313, serine 337–threonine 340, and serine 366–lysine 373.

The protein belongs to the mTERF family. As to quaternary structure, monomer. In terms of processing, phosphoprotein with mostly four phosphate groups. While the DNA-binding activity is unaffected by the phosphorylation state, only the phosphorylated form of the protein is active for termination activity. Functioning seems to be regulated by phosphorylation. Expressed strongly in the heart and at lower levels in brain, liver and kidney.

The protein localises to the mitochondrion. Functionally, transcription termination factor. Binds to a 28 bp region within the tRNA(Leu(uur)) gene at a position immediately adjacent to and downstream of the 16S rRNA gene; this region comprises a tridecamer sequence critical for directing accurate termination. Binds DNA along the major grove and promotes DNA bending and partial unwinding. Promotes base flipping. Transcription termination activity appears to be polarized with highest specificity for transcripts initiated on the light strand. In Mus musculus (Mouse), this protein is Transcription termination factor 1b, mitochondrial.